The primary structure comprises 469 residues: Pup--protein ligase (469 aa).

E9 provides a ligand contact to Mg(2+). Residue R53 participates in ATP binding. Mg(2+) is bound at residue Y55. Catalysis depends on D57, which acts as the Proton acceptor. E63 is a Mg(2+) binding site. ATP is bound by residues T66 and W430.

Belongs to the Pup ligase/Pup deamidase family. Pup-conjugating enzyme subfamily.

It carries out the reaction ATP + [prokaryotic ubiquitin-like protein]-L-glutamate + [protein]-L-lysine = ADP + phosphate + N(6)-([prokaryotic ubiquitin-like protein]-gamma-L-glutamyl)-[protein]-L-lysine.. The protein operates within protein degradation; proteasomal Pup-dependent pathway. It participates in protein modification; protein pupylation. Functionally, catalyzes the covalent attachment of the prokaryotic ubiquitin-like protein modifier Pup to the proteasomal substrate proteins, thereby targeting them for proteasomal degradation. This tagging system is termed pupylation. The ligation reaction involves the side-chain carboxylate of the C-terminal glutamate of Pup and the side-chain amino group of a substrate lysine. This chain is Pup--protein ligase, found in Kocuria rhizophila (strain ATCC 9341 / DSM 348 / NBRC 103217 / DC2201).